The following is a 1032-amino-acid chain: Probable LRR receptor-like serine/threonine-protein kinase At1g56130 (1032 aa).

The N-terminal stretch at 1–29 (MTRIRRSPCLLLLIIWFMCIAGSVQVVQS) is a signal peptide. Residues 30–636 (QNQTGATTHP…PPSKGKNRTG (607 aa)) lie on the Extracellular side of the membrane. 3 N-linked (GlcNAc...) asparagine glycosylation sites follow: Asn31, Asn61, and Asn95. LRR repeat units lie at residues 101-122 (ITNI…LWTL), 123-146 (TYLT…IGNL), 148-170 (RMQW…IGLL), 171-194 (TDLR…IGRC), 196-217 (KLQQ…SFAN), 242-265 (WTKL…SFSN), 290-314 (MKSL…IGEH), 315-338 (SSLR…LFNL), 340-360 (QLTH…TQKT), and 361-385 (QSLR…SLPS). Residue Asn145 is glycosylated (N-linked (GlcNAc...) asparagine). The N-linked (GlcNAc...) asparagine glycan is linked to Asn182. Residues Asn265, Asn302, Asn337, Asn348, and Asn352 are each glycosylated (N-linked (GlcNAc...) asparagine). N-linked (GlcNAc...) asparagine glycans are attached at residues Asn394, Asn580, and Asn633. A helical membrane pass occupies residues 637–657 (TIVGVIVGVGLLSILAGVVMF). Residues 658-1032 (TIRKRRKRYT…MLGSKINEGR (375 aa)) lie on the Cytoplasmic side of the membrane. Phosphothreonine is present on Thr683. A Protein kinase domain is found at 694 to 968 (FDPSNKLGEG…VAMLSGDVEI (275 aa)). Residues 700–708 (LGEGGFGPV) and Lys722 contribute to the ATP site. At Tyr767 the chain carries Phosphotyrosine. The active-site Proton acceptor is Asp818. Phosphoserine is present on residues Ser822 and Ser851. A phosphothreonine mark is found at Thr852 and Thr857. Tyr865 carries the post-translational modification Phosphotyrosine. Positions 1008-1032 (APGSEISPRDSDFKPMLGSKINEGR) are disordered.

This sequence belongs to the protein kinase superfamily. Ser/Thr protein kinase family.

The protein resides in the cell membrane. The enzyme catalyses L-seryl-[protein] + ATP = O-phospho-L-seryl-[protein] + ADP + H(+). It carries out the reaction L-threonyl-[protein] + ATP = O-phospho-L-threonyl-[protein] + ADP + H(+). This Arabidopsis thaliana (Mouse-ear cress) protein is Probable LRR receptor-like serine/threonine-protein kinase At1g56130.